Here is a 203-residue protein sequence, read N- to C-terminus: Molybdenum cofactor guanylyltransferase (203 aa).

GTP contacts are provided by residues 12-14, Lys25, Asn53, Asp71, and Asp101; that span reads LAG. Asp101 is a Mg(2+) binding site.

This sequence belongs to the MobA family. As to quaternary structure, monomer. Mg(2+) is required as a cofactor.

It is found in the cytoplasm. The catalysed reaction is Mo-molybdopterin + GTP + H(+) = Mo-molybdopterin guanine dinucleotide + diphosphate. Functionally, transfers a GMP moiety from GTP to Mo-molybdopterin (Mo-MPT) cofactor (Moco or molybdenum cofactor) to form Mo-molybdopterin guanine dinucleotide (Mo-MGD) cofactor. The protein is Molybdenum cofactor guanylyltransferase of Methylibium petroleiphilum (strain ATCC BAA-1232 / LMG 22953 / PM1).